A 233-amino-acid chain; its full sequence is Tumor necrosis factor (233 aa).

The Cytoplasmic portion of the chain corresponds to 1 to 35 (MSTESMIRDVELAEEALPKKTGGPQGSRRCLFLSL). Residue S2 is modified to Phosphoserine; by CK1. Residues K19 and K20 are each lipidated (N6-myristoyl lysine). The helical; Signal-anchor for type II membrane protein transmembrane segment at 36-56 (FSFLLVAGATTLFCLLHFGVI) threads the bilayer. Residues 57–233 (GPQREEFPKD…GQVYFGIIAL (177 aa)) lie on the Extracellular side of the membrane. S80 carries an O-linked (GalNAc...) serine; in soluble form glycan. The THD domain occupies 88-233 (PVAHVVANPQ…GQVYFGIIAL (146 aa)). Cysteines 145 and 177 form a disulfide.

The protein belongs to the tumor necrosis factor family. In terms of assembly, homotrimer. Interacts with SPPL2B. Post-translationally, the soluble form derives from the membrane form by proteolytic processing. The membrane-bound form is further proteolytically processed by SPPL2A or SPPL2B through regulated intramembrane proteolysis producing TNF intracellular domains (ICD1 and ICD2) released in the cytosol and TNF C-domain 1 and C-domain 2 secreted into the extracellular space. In terms of processing, the membrane form, but not the soluble form, is phosphorylated on serine residues. Dephosphorylation of the membrane form occurs by binding to soluble TNFRSF1A/TNFR1. O-glycosylated; glycans contain galactose, N-acetylgalactosamine and N-acetylneuraminic acid. Post-translationally, the soluble form is demyristoylated by SIRT6, promoting its secretion.

The protein localises to the cell membrane. The protein resides in the membrane. It is found in the secreted. Its function is as follows. Cytokine that binds to TNFRSF1A/TNFR1 and TNFRSF1B/TNFBR. It is mainly secreted by macrophages and can induce cell death of certain tumor cell lines. It is potent pyrogen causing fever by direct action or by stimulation of interleukin-1 secretion and is implicated in the induction of cachexia, Under certain conditions it can stimulate cell proliferation and induce cell differentiation. Induces insulin resistance in adipocytes via inhibition of insulin-induced IRS1 tyrosine phosphorylation and insulin-induced glucose uptake. Induces GKAP42 protein degradation in adipocytes which is partially responsible for TNF-induced insulin resistance. Plays a role in angiogenesis by inducing VEGF production synergistically with IL1B and IL6. Promotes osteoclastogenesis and therefore mediates bone resorption. The TNF intracellular domain (ICD) form induces IL12 production in dendritic cells. This chain is Tumor necrosis factor (TNF), found in Papio sp. (Baboon).